A 212-amino-acid chain; its full sequence is uncharacterized protein (212 aa).

It belongs to the flavoredoxin family. FMN serves as cofactor.

This is an uncharacterized protein from Methanothermobacter thermautotrophicus (strain ATCC 29096 / DSM 1053 / JCM 10044 / NBRC 100330 / Delta H) (Methanobacterium thermoautotrophicum).